The sequence spans 377 residues: Chaperone protein DnaJ (377 aa).

In terms of domain architecture, J spans 5–70 (DFYEVLGVER…SKRAAYDQYG (66 aa)). The segment at 136 to 214 (GTTVTIRVPT…CHGQGRVEEQ (79 aa)) adopts a CR-type zinc-finger fold. 8 residues coordinate Zn(2+): Cys149, Cys152, Cys166, Cys169, Cys188, Cys191, Cys202, and Cys205. CXXCXGXG motif repeat units lie at residues 149–156 (CKTCNGSG), 166–173 (CTTCGGIG), 188–195 (CPRCHGTG), and 202–209 (CGSCHGQG).

This sequence belongs to the DnaJ family. Homodimer. The cofactor is Zn(2+).

It localises to the cytoplasm. In terms of biological role, participates actively in the response to hyperosmotic and heat shock by preventing the aggregation of stress-denatured proteins and by disaggregating proteins, also in an autonomous, DnaK-independent fashion. Unfolded proteins bind initially to DnaJ; upon interaction with the DnaJ-bound protein, DnaK hydrolyzes its bound ATP, resulting in the formation of a stable complex. GrpE releases ADP from DnaK; ATP binding to DnaK triggers the release of the substrate protein, thus completing the reaction cycle. Several rounds of ATP-dependent interactions between DnaJ, DnaK and GrpE are required for fully efficient folding. Also involved, together with DnaK and GrpE, in the DNA replication of plasmids through activation of initiation proteins. In Pseudomonas aeruginosa (strain LESB58), this protein is Chaperone protein DnaJ.